The primary structure comprises 285 residues: Eukaryotic translation initiation factor 2 subunit beta (285 aa).

Residues 30 to 69 are disordered; sequence DAAVNGKENGSGDDLFAGLKKKKKKSKSVSADAEAEKEPT. Ser-40 bears the Phosphoserine mark. Position 69 is a phosphothreonine (Thr-69). A phosphoserine mark is found at Ser-80, Ser-92, and Ser-112. Thr-116 is subject to Phosphothreonine. At Ser-118 the chain carries Phosphoserine. Residues 236–262 form a C4-type zinc finger; it reads CKTCKSINTELKREQSNRLFFMVCKSC.

Belongs to the eIF-2-beta/eIF-5 family. In terms of assembly, eukaryotic translation initiation factor 2 eIF2 is a heterotrimeric complex composed of an alpha, a beta and a gamma subunit. The factors eIF-1, eIF-2, eIF-3, TIF5/eIF-5 and methionyl-tRNAi form a multifactor complex (MFC) that may bind to the 40S ribosome. Interacts with GCD6. Interacts with GCD1. Interacts with TIF5/eIF-5. Interacts with CDC123.

It localises to the cytoplasm. Its subcellular location is the cytosol. Its function is as follows. Component of the eIF2 complex that functions in the early steps of protein synthesis by forming a ternary complex with GTP and initiator tRNA. This complex binds to a 40S ribosomal subunit, followed by mRNA binding to form a 43S pre-initiation complex (43S PIC). Junction of the 60S ribosomal subunit to form the 80S initiation complex is preceded by hydrolysis of the GTP bound to eIF2 and release of an eIF2-GDP binary complex. In order for eIF2 to recycle and catalyze another round of initiation, the GDP bound to eIF2 must exchange with GTP by way of a reaction catalyzed by eIF2B. The protein is Eukaryotic translation initiation factor 2 subunit beta (SUI3) of Saccharomyces cerevisiae (strain ATCC 204508 / S288c) (Baker's yeast).